A 154-amino-acid chain; its full sequence is Probable chemoreceptor glutamine deamidase CheD (154 aa).

Belongs to the CheD family.

It carries out the reaction L-glutaminyl-[protein] + H2O = L-glutamyl-[protein] + NH4(+). In terms of biological role, probably deamidates glutamine residues to glutamate on methyl-accepting chemotaxis receptors (MCPs), playing an important role in chemotaxis. This chain is Probable chemoreceptor glutamine deamidase CheD, found in Methanococcus maripaludis (strain DSM 14266 / JCM 13030 / NBRC 101832 / S2 / LL).